A 59-amino-acid chain; its full sequence is UPF0337 protein MM_2677 (59 aa).

Basic and acidic residues-rich tracts occupy residues 1 to 24 (MKEGTKEEMEGKFSKAKGEIKESA) and 33 to 59 (MEAKGEAEKRKGEAQEKVGKIRKEFEK). The disordered stretch occupies residues 1 to 59 (MKEGTKEEMEGKFSKAKGEIKESAGEMTGDIEMEAKGEAEKRKGEAQEKVGKIRKEFEK).

This sequence belongs to the UPF0337 (CsbD) family.

This Methanosarcina mazei (strain ATCC BAA-159 / DSM 3647 / Goe1 / Go1 / JCM 11833 / OCM 88) (Methanosarcina frisia) protein is UPF0337 protein MM_2677.